A 559-amino-acid chain; its full sequence is Proline--tRNA ligase (559 aa).

The protein belongs to the class-II aminoacyl-tRNA synthetase family. ProS type 1 subfamily. Homodimer.

The protein resides in the cytoplasm. The catalysed reaction is tRNA(Pro) + L-proline + ATP = L-prolyl-tRNA(Pro) + AMP + diphosphate. Its function is as follows. Catalyzes the attachment of proline to tRNA(Pro) in a two-step reaction: proline is first activated by ATP to form Pro-AMP and then transferred to the acceptor end of tRNA(Pro). As ProRS can inadvertently accommodate and process non-cognate amino acids such as alanine and cysteine, to avoid such errors it has two additional distinct editing activities against alanine. One activity is designated as 'pretransfer' editing and involves the tRNA(Pro)-independent hydrolysis of activated Ala-AMP. The other activity is designated 'posttransfer' editing and involves deacylation of mischarged Ala-tRNA(Pro). The misacylated Cys-tRNA(Pro) is not edited by ProRS. This is Proline--tRNA ligase from Ruthia magnifica subsp. Calyptogena magnifica.